The sequence spans 248 residues: Large ribosomal subunit protein uL30 (248 aa).

Met1 bears the N-acetylmethionine mark. A run of 4 repeats spans residues 7–18 (KKKEVPAVPETL), 19–30 (KKKRRNFAELKI), 31–42 (KRLRKKFAQKML), and 43–54 (RKARRKLIYEKA). The interval 7-54 (KKKEVPAVPETLKKKRRNFAELKIKRLRKKFAQKMLRKARRKLIYEKA) is 4 X 12 AA tandem repeats. At Thr17 the chain carries Phosphothreonine. The residue at position 124 (Lys124) is an N6-acetyllysine. N6-succinyllysine is present on Lys127. Tyr139 carries the post-translational modification Phosphotyrosine.

The protein belongs to the universal ribosomal protein uL30 family. Component of the large ribosomal subunit. Homodimer. Interacts with DHX33.

It localises to the cytoplasm. Functionally, component of the large ribosomal subunit. The ribosome is a large ribonucleoprotein complex responsible for the synthesis of proteins in the cell. Binds to G-rich structures in 28S rRNA and in mRNAs. Plays a regulatory role in the translation apparatus; inhibits cell-free translation of mRNAs. The sequence is that of Large ribosomal subunit protein uL30 (RPL7) from Homo sapiens (Human).